The sequence spans 567 residues: Dihydrolipoyllysine-residue acetyltransferase component of pyruvate dehydrogenase complex (567 aa).

2 Lipoyl-binding domains span residues 2–75 and 108–181; these read SKQI…LVLE and IVEV…MRFE. Residues Lys41 and Lys147 each carry the N6-lipoyllysine modification. Low complexity predominate over residues 192–238; the sequence is SAPASTSAPQTAAPATTAQAPQAAAPDTTAQAPQAAAPDTTAQAAQS. The interval 192 to 249 is disordered; that stretch reads SAPASTSAPQTAAPATTAQAPQAAAPDTTAQAPQAAAPDTTAQAAQSNNNVSGLSQEQ. Polar residues predominate over residues 239–249; sequence NNNVSGLSQEQ. The Peripheral subunit-binding (PSBD) domain occupies 258 to 295; the sequence is HATPVIRRLAREFGVNLDKVKGTGRKGRIVKEDIEAYV. Catalysis depends on residues Cys484, His540, and Asp544.

It belongs to the 2-oxoacid dehydrogenase family. Forms a 24-polypeptide structural core with octahedral symmetry. Requires (R)-lipoate as cofactor.

The enzyme catalyses N(6)-[(R)-dihydrolipoyl]-L-lysyl-[protein] + acetyl-CoA = N(6)-[(R)-S(8)-acetyldihydrolipoyl]-L-lysyl-[protein] + CoA. Functionally, the pyruvate dehydrogenase complex catalyzes the overall conversion of pyruvate to acetyl-CoA and CO(2). It contains multiple copies of three enzymatic components: pyruvate dehydrogenase (E1), dihydrolipoamide acetyltransferase (E2) and lipoamide dehydrogenase (E3). The sequence is that of Dihydrolipoyllysine-residue acetyltransferase component of pyruvate dehydrogenase complex (aceF) from Haemophilus influenzae (strain ATCC 51907 / DSM 11121 / KW20 / Rd).